A 148-amino-acid polypeptide reads, in one-letter code: 3-dehydroquinate dehydratase (148 aa).

The active-site Proton acceptor is tyrosine 22. Substrate is bound by residues asparagine 73, histidine 79, and aspartate 86. The active-site Proton donor is the histidine 99. Substrate is bound by residues 100–101 and arginine 110; that span reads LS.

Belongs to the type-II 3-dehydroquinase family. As to quaternary structure, homododecamer.

It carries out the reaction 3-dehydroquinate = 3-dehydroshikimate + H2O. It functions in the pathway metabolic intermediate biosynthesis; chorismate biosynthesis; chorismate from D-erythrose 4-phosphate and phosphoenolpyruvate: step 3/7. Its function is as follows. Catalyzes a trans-dehydration via an enolate intermediate. The protein is 3-dehydroquinate dehydratase of Jannaschia sp. (strain CCS1).